A 333-amino-acid chain; its full sequence is Small ribosomal subunit protein uS2 (333 aa).

It belongs to the universal ribosomal protein uS2 family.

The chain is Small ribosomal subunit protein uS2 from Azorhizobium caulinodans (strain ATCC 43989 / DSM 5975 / JCM 20966 / LMG 6465 / NBRC 14845 / NCIMB 13405 / ORS 571).